Consider the following 188-residue polypeptide: Elongation factor P-like protein (188 aa).

This sequence belongs to the elongation factor P family.

This Alcanivorax borkumensis (strain ATCC 700651 / DSM 11573 / NCIMB 13689 / SK2) protein is Elongation factor P-like protein.